A 166-amino-acid polypeptide reads, in one-letter code: uncharacterized protein (166 aa).

This sequence to M.jannaschii MJ0992.

This is an uncharacterized protein from Methanocaldococcus jannaschii (strain ATCC 43067 / DSM 2661 / JAL-1 / JCM 10045 / NBRC 100440) (Methanococcus jannaschii).